Reading from the N-terminus, the 160-residue chain is Cyclic pyranopterin monophosphate synthase (160 aa).

Residues 76 to 78 (LCH) and 114 to 115 (ME) each bind substrate. The active site involves Asp129.

It belongs to the MoaC family. As to quaternary structure, homohexamer; trimer of dimers.

The catalysed reaction is (8S)-3',8-cyclo-7,8-dihydroguanosine 5'-triphosphate = cyclic pyranopterin phosphate + diphosphate. The protein operates within cofactor biosynthesis; molybdopterin biosynthesis. In terms of biological role, catalyzes the conversion of (8S)-3',8-cyclo-7,8-dihydroguanosine 5'-triphosphate to cyclic pyranopterin monophosphate (cPMP). The sequence is that of Cyclic pyranopterin monophosphate synthase from Mesorhizobium japonicum (strain LMG 29417 / CECT 9101 / MAFF 303099) (Mesorhizobium loti (strain MAFF 303099)).